The following is a 596-amino-acid chain: Bromodomain-containing protein 9 (596 aa).

Over residues 1 to 10 the composition is skewed to basic residues; the sequence is MGKKHKKHKA. Disordered stretches follow at residues 1-26 and 38-137; these read MGKK…PLEK and EVTE…AENE. Residues 50–62 show a composition bias toward basic and acidic residues; it reads SYYDDRSDHERER. Ser-56 carries the post-translational modification Phosphoserine. Residues 63-73 are compositionally biased toward basic residues; sequence HREKKKKKKKK. Residues 74–85 are compositionally biased toward basic and acidic residues; the sequence is SEKEKHLDEEER. The segment covering 86 to 97 has biased composition (basic residues); it reads RKRKEEKKRKRE. A compositionally biased stretch (basic and acidic residues) spans 111–126; it reads DPGKKVEVEPPPDRPV. The 105-residue stretch at 136–240 folds into the Bromo domain; sequence NESTPIQRLL…HAGFKMMSKA (105 aa). The interval 214–216 is histone H4K5ac H4K8ac and histone H4K5bu H4K8bu binding; the sequence is TYN. Residue Lys-372 is modified to N6-acetyllysine; alternate. Lys-372 is covalently cross-linked (Glycyl lysine isopeptide (Lys-Gly) (interchain with G-Cter in SUMO2); alternate). The disordered stretch occupies residues 536–596; sequence AQAERGGSRP…SPEPAAPAKN (61 aa). The span at 543 to 555 shows a compositional bias: low complexity; sequence SRPSSNLSSLSTA. Ser-565 and Ser-587 each carry phosphoserine.

In terms of assembly, binds acetylated histones H3 and H4. Binds butyrylated histone H4. Component of the multiprotein chromatin-remodeling subcomplex SWI/SNF called GBAF, which includes at least BICRA or BICRAL (mutually exclusive), BRD9, SS18, the core BAF subunits, SMARCA2/BRM, SMARCA4/BRG1/BAF190A, ACTL6A/BAF53, SMARCC1/BAF155, and SMARCD1/BAF60A. Interacts (via N-terminal bromodomain) with acetylated RAD54. Interacts (via C-terminus) with RAD51.

The protein localises to the nucleus. Its function is as follows. Plays a role in chromatin remodeling and regulation of transcription. Acts as a chromatin reader that recognizes and binds acylated histones: binds histones that are acetylated and/or butyrylated. Component of SWI/SNF chromatin remodeling subcomplex GBAF that carries out key enzymatic activities, changing chromatin structure by altering DNA-histone contacts within a nucleosome in an ATP-dependent manner. Also orchestrates the RAD51-RAD54 complex formation and thereby plays a role in homologous recombination (HR). The chain is Bromodomain-containing protein 9 (Brd9) from Mus musculus (Mouse).